Here is a 507-residue protein sequence, read N- to C-terminus: MKVTIRINGDVLSAYIPKKDLEEPIISVANEDLWGGSILLRNGWRLALPHLPQEARLPVTVEARRMFGRLDRGAHEKPDRMTRIGEISSSQDAAAMLAENQKMHPWPALTRTAYEDVAACISSGELSGSGLGIINAFERRMEEWIGGGYVVSASSGTAALTVALIALGIQPGDVVLLPSYTWAATALAPLLIGAIPRFVDIDPNSYNISPTALAAAITPDVKAIIVVHMHGISCDMDEIICHAREQGIAVIEDCAQAHGALYKGQHVGLLSDIGCFSMQKSKHLSAGDGGFMVTRDPTLAQKMRDICNFGLPTPKANYRFDEVVRDGYAVFRECEQIGGMFRLQPMSAALVMHQLEHLRQRIAWLQTAMEPLVEESAKIPFFKITRSHVDRTHVWHKIRVGIDYAAVDYFGRSMAEIRRGLRNSLAERGISSTLWTAPILPLQTAFRPYAGVVEWTKSAGHLAIENSFIVFDENYPLIAQEPAKMAELVVKLQQAWDEHFTSLARGK.

Positions 256–275 (QAHGALYKGQHVGLLSDIGC) form a DNA-binding region, H-T-H motif. N6-(pyridoxal phosphate)lysine is present on Lys282.

The protein belongs to the DegT/DnrJ/EryC1 family.

Functionally, involved in the biosynthesis of the rhizopine 3-O-methyl-scyllo-inosamine. May have a regulatory role in controlling the housekeeping genes within the nodule which are involved in the biosynthesis of the rhizopine backbone. The polypeptide is Protein MosB (mosB) (Rhizobium meliloti (Ensifer meliloti)).